Reading from the N-terminus, the 137-residue chain is Large ribosomal subunit protein uL16 (137 aa).

This sequence belongs to the universal ribosomal protein uL16 family. As to quaternary structure, part of the 50S ribosomal subunit.

Functionally, binds 23S rRNA and is also seen to make contacts with the A and possibly P site tRNAs. The polypeptide is Large ribosomal subunit protein uL16 (Cereibacter sphaeroides (strain ATCC 17029 / ATH 2.4.9) (Rhodobacter sphaeroides)).